The chain runs to 312 residues: Protein Rep40 (312 aa).

The SF3 helicase domain occupies 84–239 (DPQYAASVFL…LDHDFGKVTK (156 aa)). ATP is bound at residue 110 to 117 (GPATTGKT). The interval 264–301 (KGGAKKRPAPSDADISEPKRVRESVAQPSTSDAEASIN) is disordered.

Homooligomer.

It localises to the host nucleus. The catalysed reaction is ATP + H2O = ADP + phosphate + H(+). In terms of biological role, plays a critical role during packaging of viral DNA into empty capsids, where they are thought to be part of the packaging motor complex. The single stranded genomic DNA is packaged in a 3' to 5' direction and requires the association of viral DNA with Rep40. This Mammalia (AAV-2) protein is Protein Rep40 (Rep40).